The chain runs to 472 residues: Adenosylhomocysteinase (472 aa).

The substrate site is built by Thr62, Asp137, and Glu197. 198 to 200 (TTT) contributes to the NAD(+) binding site. Substrate-binding residues include Lys227 and Asp231. NAD(+) contacts are provided by residues Asn232, 261–266 (GYGDVG), Glu284, Asn319, 340–342 (IGH), and Asn385.

It belongs to the adenosylhomocysteinase family. NAD(+) serves as cofactor.

It localises to the cytoplasm. It carries out the reaction S-adenosyl-L-homocysteine + H2O = L-homocysteine + adenosine. The protein operates within amino-acid biosynthesis; L-homocysteine biosynthesis; L-homocysteine from S-adenosyl-L-homocysteine: step 1/1. Functionally, may play a key role in the regulation of the intracellular concentration of adenosylhomocysteine. The protein is Adenosylhomocysteinase of Bordetella petrii (strain ATCC BAA-461 / DSM 12804 / CCUG 43448).